Here is a 608-residue protein sequence, read N- to C-terminus: Chaperone protein HtpG (608 aa).

The a; substrate-binding stretch occupies residues 1-332 (MQFQTEVNQL…VEDLPLNVSR (332 aa)). The b stretch occupies residues 333 to 536 (EILQENQILK…KNKPDFAMQQ (204 aa)). The interval 537–608 (LLKQMGQEQN…LTKIINKAFS (72 aa)) is c.

It belongs to the heat shock protein 90 family. Homodimer.

It localises to the cytoplasm. Its function is as follows. Molecular chaperone. Has ATPase activity. This is Chaperone protein HtpG from Campylobacter jejuni subsp. jejuni serotype O:2 (strain ATCC 700819 / NCTC 11168).